A 765-amino-acid polypeptide reads, in one-letter code: Probable dipeptidyl peptidase 4 (765 aa).

Residues 1-14 form the signal peptide; that stretch reads MKWSILLLVGCAAA. N-linked (GlcNAc...) asparagine glycosylation is found at N35, N78, N101, N110, N169, N218, N465, and N490. Residue S613 is the Charge relay system of the active site. N665 carries N-linked (GlcNAc...) asparagine glycosylation. Catalysis depends on charge relay system residues D690 and H725.

It belongs to the peptidase S9B family.

It is found in the secreted. It catalyses the reaction Release of an N-terminal dipeptide, Xaa-Yaa-|-Zaa-, from a polypeptide, preferentially when Yaa is Pro, provided Zaa is neither Pro nor hydroxyproline.. Extracellular dipeptidyl-peptidase which removes N-terminal dipeptides sequentially from polypeptides having unsubstituted N-termini provided that the penultimate residue is proline. Contributes to pathogenicity. In Aspergillus fumigatus (strain CBS 144.89 / FGSC A1163 / CEA10) (Neosartorya fumigata), this protein is Probable dipeptidyl peptidase 4 (dpp4).